A 392-amino-acid chain; its full sequence is Small ribosomal subunit protein bS1 (392 aa).

S1 motif domains follow at residues 16 to 90, 108 to 173, 194 to 262, and 279 to 348; these read GDKV…LSKR, DEVI…LSRK, GDVI…LSIK, and DDVI…LSIK. The tract at residues 361–380 is disordered; the sequence is ASTTQSYLEDDNDEDKPTLG.

It belongs to the bacterial ribosomal protein bS1 family.

In terms of biological role, binds mRNA; thus facilitating recognition of the initiation point. It is needed to translate mRNA with a short Shine-Dalgarno (SD) purine-rich sequence. The sequence is that of Small ribosomal subunit protein bS1 (rpsA) from Staphylococcus epidermidis (strain ATCC 35984 / DSM 28319 / BCRC 17069 / CCUG 31568 / BM 3577 / RP62A).